Reading from the N-terminus, the 179-residue chain is Large ribosomal subunit protein uL6 (179 aa).

It belongs to the universal ribosomal protein uL6 family. As to quaternary structure, part of the 50S ribosomal subunit.

This protein binds to the 23S rRNA, and is important in its secondary structure. It is located near the subunit interface in the base of the L7/L12 stalk, and near the tRNA binding site of the peptidyltransferase center. The sequence is that of Large ribosomal subunit protein uL6 from Metamycoplasma arthritidis (strain 158L3-1) (Mycoplasma arthritidis).